The following is a 479-amino-acid chain: Cysteine--tRNA ligase (479 aa).

Zn(2+) is bound at residue C28. A 'HIGH' region motif is present at residues 30 to 40 (PTVYDHAHLGH). 3 residues coordinate Zn(2+): C207, H232, and E236. Positions 264–268 (KMSKS) match the 'KMSKS' region motif. K267 lines the ATP pocket.

This sequence belongs to the class-I aminoacyl-tRNA synthetase family. It depends on Zn(2+) as a cofactor.

It localises to the cytoplasm. The enzyme catalyses tRNA(Cys) + L-cysteine + ATP = L-cysteinyl-tRNA(Cys) + AMP + diphosphate. The sequence is that of Cysteine--tRNA ligase from Methanococcus aeolicus (strain ATCC BAA-1280 / DSM 17508 / OCM 812 / Nankai-3).